We begin with the raw amino-acid sequence, 664 residues long: Fructose-1,6-bisphosphatase class 3 (664 aa).

It belongs to the FBPase class 3 family. It depends on Mn(2+) as a cofactor.

It carries out the reaction beta-D-fructose 1,6-bisphosphate + H2O = beta-D-fructose 6-phosphate + phosphate. It participates in carbohydrate biosynthesis; gluconeogenesis. This chain is Fructose-1,6-bisphosphatase class 3, found in Bacteroides fragilis (strain YCH46).